The sequence spans 255 residues: Uracil-DNA glycosylase (255 aa).

Positions 1 to 20 (MFSASTTPEQPLGLSGDATP) are disordered. Asp-99 (proton acceptor) is an active-site residue.

Belongs to the uracil-DNA glycosylase (UDG) superfamily. UNG family.

Its subcellular location is the host nucleus. The enzyme catalyses Hydrolyzes single-stranded DNA or mismatched double-stranded DNA and polynucleotides, releasing free uracil.. Functionally, excises uracil residues from the DNA which can arise as a result of misincorporation of dUMP residues by DNA polymerase or deamination of cytosines. Therefore may reduce deleterious uracil incorporation into the viral genome, particularly in terminally differentiated cells which lack DNA repair enzymes. This Human herpesvirus 2 (strain HG52) (HHV-2) protein is Uracil-DNA glycosylase.